A 261-amino-acid chain; its full sequence is Taurine import ATP-binding protein TauB (261 aa).

Residues 4-233 (LQLERIGAQY…RYAAGESARA (230 aa)) enclose the ABC transporter domain. An ATP-binding site is contributed by 38–45 (GPSGSGKT).

The protein belongs to the ABC transporter superfamily. Taurine importer (TC 3.A.1.17.1) family. The complex is composed of two ATP-binding proteins (TauB), two transmembrane proteins (TauC) and a solute-binding protein (TauA).

Its subcellular location is the cell inner membrane. It catalyses the reaction taurine(out) + ATP + H2O = taurine(in) + ADP + phosphate + H(+). Part of the ABC transporter complex TauABC involved in taurine import. Responsible for energy coupling to the transport system. The protein is Taurine import ATP-binding protein TauB of Pseudomonas savastanoi pv. phaseolicola (strain 1448A / Race 6) (Pseudomonas syringae pv. phaseolicola (strain 1448A / Race 6)).